The sequence spans 467 residues: F-box protein pof9 (467 aa).

Residues 3-49 form the F-box domain; the sequence is KSPFLELSYDILLEISTYLDYKDIVHLSETCKSLSYVFDDKTIWHRF. RCC1 repeat units lie at residues 77 to 131, 302 to 354, and 355 to 417; these read RGYA…LLNE, ETFT…YLTS, and DHSI…AAGG.

As to quaternary structure, interacts with skp1.

The protein localises to the cytoplasm. It is found in the nucleus. The sequence is that of F-box protein pof9 (pof9) from Schizosaccharomyces pombe (strain 972 / ATCC 24843) (Fission yeast).